A 156-amino-acid chain; its full sequence is Small ribosomal subunit protein uS7cz/uS7cy (156 aa).

Belongs to the universal ribosomal protein uS7 family. As to quaternary structure, part of the 30S ribosomal subunit.

The protein resides in the plastid. It is found in the chloroplast. Its function is as follows. One of the primary rRNA binding proteins, it binds directly to 16S rRNA where it nucleates assembly of the head domain of the 30S subunit. The sequence is that of Small ribosomal subunit protein uS7cz/uS7cy (rps7-A) from Saccharum hybrid (Sugarcane).